The primary structure comprises 388 residues: S-adenosylmethionine synthase (388 aa).

Histidine 16 contributes to the ATP binding site. Aspartate 18 contributes to the Mg(2+) binding site. Glutamate 44 contacts K(+). L-methionine-binding residues include glutamate 57 and glutamine 100. The segment at 100–110 (QSPEIAQGVDR) is flexible loop. ATP is bound by residues 165–167 (DAK), 231–232 (KF), aspartate 240, 246–247 (RK), alanine 263, and lysine 267. Aspartate 240 lines the L-methionine pocket. Lysine 271 lines the L-methionine pocket.

This sequence belongs to the AdoMet synthase family. As to quaternary structure, homotetramer; dimer of dimers. Requires Mg(2+) as cofactor. The cofactor is K(+).

It is found in the cytoplasm. The catalysed reaction is L-methionine + ATP + H2O = S-adenosyl-L-methionine + phosphate + diphosphate. It participates in amino-acid biosynthesis; S-adenosyl-L-methionine biosynthesis; S-adenosyl-L-methionine from L-methionine: step 1/1. Functionally, catalyzes the formation of S-adenosylmethionine (AdoMet) from methionine and ATP. The overall synthetic reaction is composed of two sequential steps, AdoMet formation and the subsequent tripolyphosphate hydrolysis which occurs prior to release of AdoMet from the enzyme. In Psychrobacter sp. (strain PRwf-1), this protein is S-adenosylmethionine synthase.